The chain runs to 247 residues: Zinc finger protein YPR015C (247 aa).

2 consecutive C2H2-type zinc fingers follow at residues 185 to 207 and 213 to 237; these read KQCP…YLIH and FKCT…LRTH.

This chain is Zinc finger protein YPR015C, found in Saccharomyces cerevisiae (strain ATCC 204508 / S288c) (Baker's yeast).